The following is a 301-amino-acid chain: Probable 5-dehydro-4-deoxyglucarate dehydratase (301 aa).

Belongs to the DapA family.

It carries out the reaction 5-dehydro-4-deoxy-D-glucarate + H(+) = 2,5-dioxopentanoate + CO2 + H2O. The protein operates within carbohydrate acid metabolism; D-glucarate degradation; 2,5-dioxopentanoate from D-glucarate: step 2/2. This Cereibacter sphaeroides (strain KD131 / KCTC 12085) (Rhodobacter sphaeroides) protein is Probable 5-dehydro-4-deoxyglucarate dehydratase.